Here is a 378-residue protein sequence, read N- to C-terminus: Transcription factor YY2 (378 aa).

Positions 39-113 (LETSVGQTIE…DNLLFSPEFG (75 aa)) are mediates transcriptional activation. The segment at 243–378 (EFTSMRPKKP…LTHVKNKNDQ (136 aa)) is mediates transcriptional repression. 4 consecutive C2H2-type zinc fingers follow at residues 260–284 (IACS…LHIH), 289–311 (HVCA…QLVH), 317–341 (YQCT…VRIH), and 347–371 (FVCP…ILTH).

This sequence belongs to the YY transcription factor family. In terms of tissue distribution, weakly expressed by neuronal and glial cells in the cerebral cortex. Expressed by Purkinje cells and in the granular layers of the cerebellum. Expressed in all layers of spermatocytes in testis but not detected in sperm cells.

The protein resides in the nucleus. Functions as a multifunctional transcription factor that may exhibit positive and negative control on a large number of genes. May antagonize YY1 and function in development and differentiation. The polypeptide is Transcription factor YY2 (Yy2) (Mus musculus (Mouse)).